The following is a 457-amino-acid chain: Methylphosphonate synthase (457 aa).

In terms of domain architecture, HTH cro/C1-type 1 spans 23-74 (ILNDIKRRPEDAANELGVSIEEINSIISGKQKISPSLIEKAVNIWPVNERDF). Residues 32–50 (EDAANELGVSIEEINSIIS) constitute a DNA-binding region (H-T-H motif). Fe cation-binding residues include His-148 and His-190. Positions 247–301 (LEYYFELSNLTKEKFAKRTNFSMETLADFFTKKKLPTFDELKIIAKALNVNSRDL) constitute an HTH cro/C1-type 2 domain. The H-T-H motif DNA-binding region spans 258–277 (KEKFAKRTNFSMETLADFFT).

The protein belongs to the non-heme iron-dependent dioxygenase family. Fe(2+) is required as a cofactor.

It carries out the reaction 2-hydroxyethylphosphonate + O2 = methylphosphonate + hydrogencarbonate + H(+). Its pathway is phosphorus metabolism; phosphonate biosynthesis. Functionally, catalyzes the conversion of 2-hydroxyethylphosphonate into methylphosphonate in the methylphosphonate biosynthesis pathway. This chain is Methylphosphonate synthase (mpnS), found in Nitrosopumilus maritimus (strain SCM1).